The sequence spans 699 residues: Serine/threonine-protein kinase PRR2 (699 aa).

A disordered region spans residues 168 to 193 (SSTKKNLANDISDNKHNNNSSNTIGH). A compositionally biased stretch (polar residues) spans 184-193 (NNNSSNTIGH). In terms of domain architecture, Protein kinase spans 361-653 (RDLDVVLGEG…INGILQDGWI (293 aa)). Residues 367-375 (LGEGSGGKV) and K390 each bind ATP. The active-site Proton acceptor is D484.

Belongs to the protein kinase superfamily. Ser/Thr protein kinase family.

It carries out the reaction L-seryl-[protein] + ATP = O-phospho-L-seryl-[protein] + ADP + H(+). The catalysed reaction is L-threonyl-[protein] + ATP = O-phospho-L-threonyl-[protein] + ADP + H(+). In terms of biological role, protein kinase that functions as a regulator in the pheromone-induced mating pathway downstream of mitogen-activated protein kinase (MAPK) FUS3. Diminishes transcriptional induction of genes in response to pheromone signaling. This Saccharomyces cerevisiae (strain ATCC 204508 / S288c) (Baker's yeast) protein is Serine/threonine-protein kinase PRR2 (PRR2).